A 69-amino-acid chain; its full sequence is Large ribosomal subunit protein uL30 (69 aa).

It belongs to the universal ribosomal protein uL30 family. In terms of assembly, part of the 50S ribosomal subunit.

The polypeptide is Large ribosomal subunit protein uL30 (Rhizobium etli (strain CIAT 652)).